Reading from the N-terminus, the 210-residue chain is Glutathione S-transferase P 1 (210 aa).

The GST N-terminal domain maps to 1 to 80 (PEYTIIYFNA…LLARNHDLYG (80 aa)). Residues Tyr-7, Arg-13, Trp-38, Lys-44, 51 to 52 (QL), and 64 to 65 (QS) contribute to the glutathione site. The GST C-terminal domain occupies 82-203 (NPREASLIDM…SSDAHKKRPI (122 aa)).

Belongs to the GST superfamily. Pi family. Homodimer.

It localises to the cytoplasm. Its subcellular location is the mitochondrion. It is found in the nucleus. It catalyses the reaction RX + glutathione = an S-substituted glutathione + a halide anion + H(+). Its function is as follows. Conjugation of reduced glutathione to a wide number of exogenous and endogenous hydrophobic electrophiles. The sequence is that of Glutathione S-transferase P 1 from Bufo bufo (European toad).